Here is a 398-residue protein sequence, read N- to C-terminus: 1-deoxy-D-xylulose 5-phosphate reductoisomerase (398 aa).

NADPH-binding residues include T10, G11, S12, I13, G36, R37, N38, and N124. 1-deoxy-D-xylulose 5-phosphate is bound at residue K125. NADPH is bound at residue E126. Position 150 (D150) interacts with Mn(2+). 1-deoxy-D-xylulose 5-phosphate is bound by residues S151, E152, S186, and H209. A Mn(2+)-binding site is contributed by E152. G215 provides a ligand contact to NADPH. 1-deoxy-D-xylulose 5-phosphate contacts are provided by S222, N227, K228, and E231. E231 contacts Mn(2+).

It belongs to the DXR family. Homodimer. It depends on Mg(2+) as a cofactor. Mn(2+) is required as a cofactor.

The catalysed reaction is 2-C-methyl-D-erythritol 4-phosphate + NADP(+) = 1-deoxy-D-xylulose 5-phosphate + NADPH + H(+). The protein operates within isoprenoid biosynthesis; isopentenyl diphosphate biosynthesis via DXP pathway; isopentenyl diphosphate from 1-deoxy-D-xylulose 5-phosphate: step 1/6. Its function is as follows. Catalyzes the NADPH-dependent rearrangement and reduction of 1-deoxy-D-xylulose-5-phosphate (DXP) to 2-C-methyl-D-erythritol 4-phosphate (MEP). In Yersinia pseudotuberculosis serotype O:1b (strain IP 31758), this protein is 1-deoxy-D-xylulose 5-phosphate reductoisomerase.